A 204-amino-acid polypeptide reads, in one-letter code: Large ribosomal subunit protein eL15 (204 aa).

The protein belongs to the eukaryotic ribosomal protein eL15 family. As to quaternary structure, component of the large ribosomal subunit.

The protein resides in the cytoplasm. In terms of biological role, component of the large ribosomal subunit. The ribosome is a large ribonucleoprotein complex responsible for the synthesis of proteins in the cell. This chain is Large ribosomal subunit protein eL15 (rpl15), found in Megalobrama amblycephala (Chinese blunt snout bream).